Reading from the N-terminus, the 39-residue chain is IFECVFSCDIEKEGKPCKPKGEKKCSGGWKCKIKLCLKI.

3 disulfide bridges follow: Cys-4–Cys-25, Cys-8–Cys-31, and Cys-17–Cys-36.

It belongs to the neurotoxin 12 (Hwtx-2) family. 06 (TXP1) subfamily. As to expression, expressed by the venom gland.

It localises to the secreted. Its function is as follows. Inhibits voltage-gated calcium channels (Cav) in rat cerebellar granule cells. Has insecticidal activity. The polypeptide is Omega-theraphotoxin-Asp1g (Aphonopelma sp. (American tarantula)).